Reading from the N-terminus, the 207-residue chain is uncharacterized protein (207 aa).

Residues arginine 80, glutamate 88, and arginine 148 contribute to the active site.

The protein belongs to the thermonuclease family.

This is an uncharacterized protein from Methanocaldococcus jannaschii (strain ATCC 43067 / DSM 2661 / JAL-1 / JCM 10045 / NBRC 100440) (Methanococcus jannaschii).